The following is a 558-amino-acid chain: Glucose-6-phosphate isomerase (558 aa).

Alanine 2 bears the N-acetylalanine mark. Residue lysine 12 is modified to N6-acetyllysine. Lysine 34 bears the N6-(2-hydroxyisobutyryl)lysine mark. Position 107 is a phosphoserine (serine 107). Threonine 109 carries the post-translational modification Phosphothreonine. At lysine 142 the chain carries N6-acetyllysine. Position 159 to 160 (159 to 160) interacts with D-glucose 6-phosphate; that stretch reads GS. Residue serine 185 is modified to Phosphoserine; by CK2. D-glucose 6-phosphate is bound at residue 210–215; it reads SKTFTT. Threonine 250 is subject to Phosphothreonine. Residues glutamine 354, glutamate 358, and histidine 389 each contribute to the D-glucose 6-phosphate site. Glutamate 358 functions as the Proton donor in the catalytic mechanism. Histidine 389 is a catalytic residue. Lysine 454 carries the N6-acetyllysine; alternate modification. Lysine 454 bears the N6-malonyllysine; alternate mark. The residue at position 454 (lysine 454) is an N6-succinyllysine; alternate. Serine 455 carries the phosphoserine modification. Lysine 519 contacts D-glucose 6-phosphate. Lysine 519 is a catalytic residue.

The protein belongs to the GPI family. As to quaternary structure, homodimer; in the catalytically active form. Monomer in the secreted form. Phosphorylation at Ser-185 by CK2 has been shown to decrease enzymatic activity and may contribute to secretion by a non-classical secretory pathway. In terms of processing, ISGylated.

The protein resides in the cytoplasm. It is found in the secreted. It carries out the reaction alpha-D-glucose 6-phosphate = beta-D-fructose 6-phosphate. The protein operates within carbohydrate degradation; glycolysis; D-glyceraldehyde 3-phosphate and glycerone phosphate from D-glucose: step 2/4. Its activity is regulated as follows. Strongly inhibited by erythrose 4-phosphate. Its function is as follows. In the cytoplasm, catalyzes the conversion of glucose-6-phosphate to fructose-6-phosphate, the second step in glycolysis, and the reverse reaction during gluconeogenesis. Besides it's role as a glycolytic enzyme, also acts as a secreted cytokine: acts as an angiogenic factor (AMF) that stimulates endothelial cell motility. Acts as a neurotrophic factor, neuroleukin, for spinal and sensory neurons. It is secreted by lectin-stimulated T-cells and induces immunoglobulin secretion. The sequence is that of Glucose-6-phosphate isomerase from Homo sapiens (Human).